A 175-amino-acid polypeptide reads, in one-letter code: 6,7-dimethyl-8-ribityllumazine synthase (175 aa).

5-amino-6-(D-ribitylamino)uracil-binding positions include Phe24, Ala58 to Glu60, and Ala82 to Ile84. (2S)-2-hydroxy-3-oxobutyl phosphate is bound at residue Glu87 to Thr88. His90 acts as the Proton donor in catalysis. Asn115 contacts 5-amino-6-(D-ribitylamino)uracil. Arg129 contacts (2S)-2-hydroxy-3-oxobutyl phosphate. A disordered region spans residues Leu151–Arg175. Positions Glu152–Arg175 are enriched in acidic residues.

Belongs to the DMRL synthase family.

The catalysed reaction is (2S)-2-hydroxy-3-oxobutyl phosphate + 5-amino-6-(D-ribitylamino)uracil = 6,7-dimethyl-8-(1-D-ribityl)lumazine + phosphate + 2 H2O + H(+). It participates in cofactor biosynthesis; riboflavin biosynthesis; riboflavin from 2-hydroxy-3-oxobutyl phosphate and 5-amino-6-(D-ribitylamino)uracil: step 1/2. Catalyzes the formation of 6,7-dimethyl-8-ribityllumazine by condensation of 5-amino-6-(D-ribitylamino)uracil with 3,4-dihydroxy-2-butanone 4-phosphate. This is the penultimate step in the biosynthesis of riboflavin. The polypeptide is 6,7-dimethyl-8-ribityllumazine synthase (Bordetella petrii (strain ATCC BAA-461 / DSM 12804 / CCUG 43448)).